Consider the following 109-residue polypeptide: Hainantoxin-XVIII-4 (109 aa).

A signal peptide spans 1-18 (MKLSIIIIATSLVIAVVA). Positions 19–46 (FPSKDSKAIENDKTEQRMEIVVQETARA) are excised as a propeptide. Intrachain disulfides connect Cys55–Cys68, Cys59–Cys108, and Cys61–Cys81.

Belongs to the neurotoxin 25 family. F7 subfamily. In terms of tissue distribution, expressed by the venom gland.

The protein localises to the secreted. In terms of biological role, putative ion channel inhibitor. The chain is Hainantoxin-XVIII-4 from Cyriopagopus hainanus (Chinese bird spider).